The sequence spans 469 residues: Cyclin-dependent kinase 14 (469 aa).

Residues Ser-24, Ser-78, and Ser-95 each carry the phosphoserine modification. Residues 103 to 133 (FKSSSAGKESPKVRRHSSPSSPTSPKFGKAD) form a disordered region. Phosphoserine is present on Ser-134. A Protein kinase domain is found at 135–419 (YEKLEKLGEG…AQAALSHEYF (285 aa)). ATP contacts are provided by residues 141–149 (LGEGSYATV) and Lys-164. Residue Asp-256 is the Proton acceptor of the active site. A disordered region spans residues 449–469 (ESMRAFGKNNSYGKSLSNSKH). Residues 456–469 (KNNSYGKSLSNSKH) show a composition bias toward polar residues.

This sequence belongs to the protein kinase superfamily. CMGC Ser/Thr protein kinase family. CDC2/CDKX subfamily. Found in a complex with LRP6, CCNY and CAPRIN2 during G2/M stage; CAPRIN2 functions as a scaffold for the complex by binding to CCNY via its N terminus and to CDK14 via its C terminus. Interacts with CCNY; CCNY mediates its recruitment to the plasma membrane and promotes phosphorylation of LRP6. Interacts with CCDN3 and CDKN1A. Interacts with SEPT8. Interacts with 14-3-3 proteina YWHAB, YWHAE, YWHAH and YWHAQ. In the adult, widely expressed at low levels except in brain, kidney and testis where expression is high. In the brain, detected in cortex, hippocampus, dentate gyrus, amygdala cortex, parasubiculum and cerebellum. In the embryo, expressed predominantly in the nervous system.

Its subcellular location is the cell membrane. The protein localises to the cytoplasm. The protein resides in the nucleus. It catalyses the reaction L-seryl-[protein] + ATP = O-phospho-L-seryl-[protein] + ADP + H(+). It carries out the reaction L-threonyl-[protein] + ATP = O-phospho-L-threonyl-[protein] + ADP + H(+). Its activity is regulated as follows. Serine/threonine-protein kinase activity is promoted by associated cyclins CCDN3 and CCNY and repressed by CDKN1A. Functionally, serine/threonine-protein kinase involved in the control of the eukaryotic cell cycle, whose activity is controlled by an associated cyclin. Acts as a cell-cycle regulator of Wnt signaling pathway during G2/M phase by mediating the phosphorylation of LRP6 at 'Ser-1490', leading to the activation of the Wnt signaling pathway. Acts as a regulator of cell cycle progression and cell proliferation via its interaction with CCDN3. Phosphorylates RB1 in vitro, however the relevance of such result remains to be confirmed in vivo. May also play a role in meiosis, neuron differentiation and may indirectly act as a negative regulator of insulin-responsive glucose transport. This chain is Cyclin-dependent kinase 14 (Cdk14), found in Mus musculus (Mouse).